The following is a 249-amino-acid chain: Receptor-transporting protein 4 (249 aa).

The Cytoplasmic segment spans residues 1 to 227 (MLFPDDFSTW…QGCREPPQRE (227 aa)). The segment at 50–162 (TVLGRFQCSR…DTRNCEACSL (113 aa)) adopts a 3CxxC-type zinc-finger fold. The disordered stretch occupies residues 173 to 208 (KVKPPRSPSPLPKSSSPSKSCPPPPQTRNTDFGNKT). Positions 199–208 (TRNTDFGNKT) are enriched in polar residues. A helical transmembrane segment spans residues 228–248 (IEPPLFLFLSIAAFALFSLFT).

Belongs to the TMEM7 family. Interacts with TASR16. Interacts with OPRD1 and OPRM1; the interaction promotes cell surface localization of the OPDR1-OPRM1 heterodimer. Expressed at low levels in olfactory neurons. Upon viral infection, highly expressed in brain and different cells of nervous tissue.

It is found in the membrane. Its subcellular location is the cytoplasm. In terms of biological role, chaperone protein that facilitates the trafficking and functional cell surface expression of some G-protein coupled receptors (GPCRs). Promotes functional expression of the bitter taste receptor TAS2R16. Also promotes functional expression of the opioid receptor heterodimer OPRD1-OPRM1. In addition, acts as a potent IFN-inducible suppressor of pathogens including lyssavirus rabies, influenza A or yellow fever virus. Mechanistically, associates with the viral replicase, binds viral RNA, and thereby suppresses viral genome amplification that replicates at the endoplasmic reticulum. In addition, restores antiviral signaling by interacting with and sequestering influenza virus protein NS1. The chain is Receptor-transporting protein 4 (Rtp4) from Mus musculus (Mouse).